The chain runs to 239 residues: Sensory rhodopsin-1 (239 aa).

Topologically, residues 1–3 are extracellular; sequence MDA. The helical transmembrane segment at 4-25 threads the bilayer; that stretch reads VATAYLGGAVALIVGVAFVWLL. Over 26–34 the chain is Cytoplasmic; it reads YRSLDGSPH. Residues 35–56 form a helical membrane-spanning segment; it reads QSALAPLAIIPVFAGLSYVGMA. At 57–70 the chain is on the extracellular side; that stretch reads YDIGTVIVNGNQIV. The helical transmembrane segment at 71–92 threads the bilayer; the sequence is GLRYIDWLVTTPILVGYVGYAA. The Cytoplasmic segment spans residues 93 to 95; sequence GAS. A helical membrane pass occupies residues 96 to 118; that stretch reads RRSIIGVMVADALMIAVGAGAVV. The Extracellular segment spans residues 119–122; the sequence is TDGT. Residues 123 to 150 form a helical membrane-spanning segment; the sequence is LKWALFGVSSIFHLSLFAYLYVIFPRVV. The Cytoplasmic segment spans residues 151 to 153; sequence PDV. Residues 154 to 181 form a helical membrane-spanning segment; that stretch reads PEQIGLFNLLKNHIGLLWLAYPLVWLFG. The Extracellular portion of the chain corresponds to 182–189; that stretch reads PAGIGEAT. The chain crosses the membrane as a helical span at residues 190 to 222; it reads AAGVALTYVFLDVLAKVPYVYFFYARRRVFMHS. Lys205 carries the N6-(retinylidene)lysine modification. Residues 223-239 lie on the Cytoplasmic side of the membrane; sequence ESPPAPEQATVEATAAD.

The protein belongs to the archaeal/bacterial/fungal opsin family. Interacts with HTR-I.

The protein localises to the cell membrane. Its function is as follows. Involved in the control of phototaxis. Mediates both photoattractant (in the orange light) and photophobic (in the near UV light) responses. The signal is then transmitted to the sensory rhodopsin I transducer (HTR-I). This chain is Sensory rhodopsin-1 (sopI), found in Halobacterium salinarum (strain ATCC 29341 / DSM 671 / R1).